A 125-amino-acid chain; its full sequence is Small ribosomal subunit protein uS13 (125 aa).

Residues 93–125 (RSLPVRGQRTRTNARTRKGKRKTVAGKKKAGKK) form a disordered region.

The protein belongs to the universal ribosomal protein uS13 family. As to quaternary structure, part of the 30S ribosomal subunit. Forms a loose heterodimer with protein S19. Forms two bridges to the 50S subunit in the 70S ribosome.

In terms of biological role, located at the top of the head of the 30S subunit, it contacts several helices of the 16S rRNA. In the 70S ribosome it contacts the 23S rRNA (bridge B1a) and protein L5 of the 50S subunit (bridge B1b), connecting the 2 subunits; these bridges are implicated in subunit movement. Contacts the tRNAs in the A and P-sites. This Chlorobaculum tepidum (strain ATCC 49652 / DSM 12025 / NBRC 103806 / TLS) (Chlorobium tepidum) protein is Small ribosomal subunit protein uS13.